A 557-amino-acid chain; its full sequence is Cytochrome P450 734A2 (557 aa).

A helical membrane pass occupies residues Trp13 to Ala35. Cys495 serves as a coordination point for heme.

It belongs to the cytochrome P450 family. The cofactor is heme. Expressed in roots, shoot apex, leaf sheaths and leaf blades.

The protein resides in the membrane. Cytochrome P450 involved in brassinosteroids (BRs) inactivation and regulation of BRs homeostasis. Is a multifunctional and multisubstrate enzyme that controls the endogenous bioactive BR content both by direct inactivation of castasterone (CS) and by decreasing the levels of BR precursors. Catalyzes the oxidation of carbon 22 hydroxylated BR intermediates to produce C26 oxidized metabolites. This chain is Cytochrome P450 734A2 (CYP734A2), found in Oryza sativa subsp. japonica (Rice).